We begin with the raw amino-acid sequence, 345 residues long: Serpentine receptor class beta-5 (345 aa).

The Extracellular portion of the chain corresponds to 1–22; sequence MAEINQTKCDLAFQISYHPIYR. N5 is a glycosylation site (N-linked (GlcNAc...) asparagine). A helical transmembrane segment spans residues 23–43; that stretch reads LAQFWTLSVSLLAVPSLLYFL. The Cytoplasmic segment spans residues 44–57; it reads LKRVLLLPFHGNLK. A helical membrane pass occupies residues 58–78; that stretch reads CLLITYFSSIFLYALVLCFDF. Over 79-103 the chain is Extracellular; sequence SYQCLIPFIVTTKCSLIIDQTLYKC. A helical membrane pass occupies residues 104–124; it reads GHMTSLFFLTTPMLLPFGFSI. At 125-142 the chain is on the cytoplasmic side; the sequence is ERFVAVGMAYKYEKMRTL. A helical transmembrane segment spans residues 143–163; the sequence is LGPILCFILVAPNFVVFYFLF. Residues 164–189 are Extracellular-facing; it reads RDEQFTDSFISFLVLPNTPAVQFNNY. A helical transmembrane segment spans residues 190 to 210; that stretch reads LWFLLYAKIGNFCCNCVLLIF. At 211–241 the chain is on the cytoplasmic side; sequence HKRFKNTYLKKKTSLSVRYALEEISNSSKFT. Residues 242–262 form a helical membrane-spanning segment; that stretch reads LILTFTHLVFFGAYTIGSILV. The Extracellular portion of the chain corresponds to 263–280; the sequence is RTLGESFFGNFLNFYVAR. Residues 281-301 form a helical membrane-spanning segment; sequence GVNCAVPTYNLLIAFVGLISL. At 302-345 the chain is on the cytoplasmic side; that stretch reads RQLNSRRHAKILTKVLIRVTGQEGARNYDDIIMQQWNTVSNRTR.

The protein belongs to the nematode receptor-like protein srb family. In terms of tissue distribution, expressed throughout the head.

Its subcellular location is the cell membrane. It is found in the perikaryon. The protein localises to the cell projection. The protein resides in the dendrite. G-protein coupled receptor. Plays a role in the navigational capacity of sperm and promotes the targeting of sperm derived from males to the fertilization site in the uterus of hermaphrodites. This chain is Serpentine receptor class beta-5, found in Caenorhabditis elegans.